A 242-amino-acid chain; its full sequence is 2-amino-5-formylamino-6-ribosylaminopyrimidin-4(3H)-one 5'-monophosphate deformylase (242 aa).

The Fe cation site is built by Glu46, His48, Asp57, and His125.

Belongs to the creatininase superfamily. FAPy deformylase family. In terms of assembly, homodimer. Requires Fe(2+) as cofactor. Zn(2+) is required as a cofactor.

It carries out the reaction 2-amino-5-formylamino-6-(5-phospho-D-ribosylamino)pyrimidin-4(3H)-one + H2O = 2,5-diamino-6-(1-D-ribosylamino)pyrimidin-4(3H)-one 5'-phosphate + formate + H(+). The protein operates within cofactor biosynthesis; coenzyme F420 biosynthesis. It participates in cofactor biosynthesis; riboflavin biosynthesis. In terms of biological role, catalyzes the hydrolysis of the formamide of 2-amino-5-formylamino-6-ribosylamino-4(3H)-pyrimidinone 5'-monophosphate (FAPy) to form 2,5-diamino-6-ribosylamino-4(3H)-pyrimidinone 5'-phosphate (APy). The protein is 2-amino-5-formylamino-6-ribosylaminopyrimidin-4(3H)-one 5'-monophosphate deformylase of Methanococcus aeolicus (strain ATCC BAA-1280 / DSM 17508 / OCM 812 / Nankai-3).